The primary structure comprises 1203 residues: Exonuclease/helicase subunit RexA (1203 aa).

The UvrD-like helicase ATP-binding domain maps to 4 to 472 (VKLTPEQNEA…IRLKENFRSR (469 aa)). 25–32 (ASAGSGKT) lines the ATP pocket. The UvrD-like helicase C-terminal domain maps to 503 to 785 (VQGNISDYPV…RVMTFHKSKG (283 aa)).

This sequence belongs to the helicase family. AddA subfamily. In terms of assembly, heterodimer of RexA (AddA) and RexB. The cofactor is Mg(2+).

It catalyses the reaction Couples ATP hydrolysis with the unwinding of duplex DNA by translocating in the 3'-5' direction.. It carries out the reaction ATP + H2O = ADP + phosphate + H(+). Its function is as follows. The heterodimer acts both as an ATP-dependent DNA helicase and an ATP-dependent, dual-direction single-stranded exonuclease. Recognizes the L.lactis chi site (5'-GCGCGTG-3'), which stimulates homologous recombination. The RexA (AddA) nuclease domain is required for chi fragment generation; this subunit has 3'-&gt;5' exonuclease activity and probably also performs the helicase function. This Lactococcus lactis subsp. cremoris (strain MG1363) protein is Exonuclease/helicase subunit RexA.